Consider the following 273-residue polypeptide: 2,3,4,5-tetrahydropyridine-2,6-dicarboxylate N-succinyltransferase (273 aa).

2 residues coordinate substrate: Arg-104 and Asp-141.

This sequence belongs to the transferase hexapeptide repeat family. Homotrimer.

It is found in the cytoplasm. The enzyme catalyses (S)-2,3,4,5-tetrahydrodipicolinate + succinyl-CoA + H2O = (S)-2-succinylamino-6-oxoheptanedioate + CoA. The protein operates within amino-acid biosynthesis; L-lysine biosynthesis via DAP pathway; LL-2,6-diaminopimelate from (S)-tetrahydrodipicolinate (succinylase route): step 1/3. The sequence is that of 2,3,4,5-tetrahydropyridine-2,6-dicarboxylate N-succinyltransferase from Nitrosospira multiformis (strain ATCC 25196 / NCIMB 11849 / C 71).